We begin with the raw amino-acid sequence, 188 residues long: MPHSSPGAPLDPVAFIHSQIRTVPDWPQPGVQFRDITTLLQSPKALRILVDLFVERYVDAKLDYVAGLDARGFIIAPIVAYELSVGFVPIRKVGKLPYKTRSESYDLEYGSATVEIHEDACKPGDRVIIMDDLIATGGTMMAGRNLLQRLGAEVVEGAAIIDLPDLGGSTLLRNAGLPVYTVTEFAGH.

The protein belongs to the purine/pyrimidine phosphoribosyltransferase family. Homodimer.

Its subcellular location is the cytoplasm. The catalysed reaction is AMP + diphosphate = 5-phospho-alpha-D-ribose 1-diphosphate + adenine. It functions in the pathway purine metabolism; AMP biosynthesis via salvage pathway; AMP from adenine: step 1/1. Catalyzes a salvage reaction resulting in the formation of AMP, that is energically less costly than de novo synthesis. In Burkholderia orbicola (strain MC0-3), this protein is Adenine phosphoribosyltransferase.